Reading from the N-terminus, the 91-residue chain is DNA-directed RNA polymerase subunit omega (91 aa).

Belongs to the RNA polymerase subunit omega family. As to quaternary structure, the RNAP catalytic core consists of 2 alpha, 1 beta, 1 beta' and 1 omega subunit. When a sigma factor is associated with the core the holoenzyme is formed, which can initiate transcription.

It catalyses the reaction RNA(n) + a ribonucleoside 5'-triphosphate = RNA(n+1) + diphosphate. Its function is as follows. Promotes RNA polymerase assembly. Latches the N- and C-terminal regions of the beta' subunit thereby facilitating its interaction with the beta and alpha subunits. The protein is DNA-directed RNA polymerase subunit omega of Serratia proteamaculans (strain 568).